The chain runs to 549 residues: Cytoplasmic trehalase (549 aa).

Residues arginine 168, 175–176 (WD), asparagine 212, 221–223 (RSQ), 292–294 (RDE), and glycine 324 each bind substrate. Catalysis depends on proton donor/acceptor residues aspartate 326 and glutamate 509. Residue glutamate 525 participates in substrate binding.

The protein belongs to the glycosyl hydrolase 37 family. Monomer.

It is found in the cytoplasm. The catalysed reaction is alpha,alpha-trehalose + H2O = alpha-D-glucose + beta-D-glucose. Its pathway is glycan degradation; trehalose degradation; D-glucose from alpha,alpha-trehalose: step 1/1. Hydrolyzes trehalose to glucose. Could be involved, in cells returning to low osmolarity conditions, in the utilization of the accumulated cytoplasmic trehalose, which was synthesized in response to high osmolarity. The sequence is that of Cytoplasmic trehalase from Salmonella choleraesuis (strain SC-B67).